We begin with the raw amino-acid sequence, 980 residues long: MATAATSPALKRLDLRDPAALFETHGAEEIRGLERQVRAEIEHKKEELRQMVGERYRDLIEAADTIGQMRRCAVGLVDAVKATDQYCARLRQAGSAAPRPPRAQQPQQPSQEKFYSMAAQIKLLLEIPEKIWSSMEASQCLHATQLYLLCCHLHSLLQLDSSSSRYSPVLSRFPILIRQVAAASHFRSTILHESKMLLKCQGVSDQAVAEALCSIMLLEESSPRQALTDFLLARKATIQKLLNQPHHGAGIKAQICSLVELLATTLKQAHALFYTLPEGLLPDPALPCGLLFSTLETITGQHPAGKGTGVLQEEMKLCSWFKHLPASIVEFQPTLRTLAHPISQEYLKDTLQKWIHMCNEDIKNGITNLLMYVKSMKGLAGIRDAMWELLTNESTNHSWDVLCRRLLEKPLLFWEDMMQQLFLDRLQTLTKEGFDSISSSSKELLVSALQELESSTSNSPSNKHIHFEYNMSLFLWSESPNDLPSDAAWVSVANRGQFASSGLSMKAQAISPCVQNFCSALDSKLKVKLDDLLAYLPSDDSSLPKDVSPTQAKSSAFDRYADAGTVQEMLRTQSVACIKHIVDCIRAELQSIEEGVQGQQDALNSAKLHSVLFMARLCQSLGELCPHLKQCILGKSESSEKPAREFRALRKQGKVKTQEIIPTQAKWQEVKEVLLQQSVMGYQVWSSAVVKVLIHGFTQSLLLDDAGSVLATATSWDELEIQEEAESGSSVTSKIRLPAQPSWYVQSFLFSLCQEINRVGGHALPKVTLQEMLKSCMVQVVAAYEKLSEEKQIKKEGAFPVTQNRALQLLYDLRYLNIVLTAKGDEVKSGRSKPDSRIEKVTDHLEALIDPFDLDVFTPHLNSNLHRLVQRTSVLFGLVTGTENQLAPRSSTFNSQEPHNILPLASSQIRFGLLPLSMTSTRKAKSTRNIETKAQVVPPARSTAGDPTVPGSLFRQLVSEEDNTSAPSLFKLGWLSSMTK.

Ala-2 carries the N-acetylalanine modification. Ser-7 bears the Phosphoserine mark.

The protein belongs to the COG1 family. As to quaternary structure, component of the conserved oligomeric Golgi complex which is composed of eight different subunits and is required for normal Golgi morphology and localization.

It localises to the golgi apparatus membrane. Functionally, required for normal Golgi function. The chain is Conserved oligomeric Golgi complex subunit 1 (COG1) from Homo sapiens (Human).